A 602-amino-acid chain; its full sequence is Elongation factor 4 (602 aa).

One can recognise a tr-type G domain in the interval 7–189; it reads RNIRNFSIIA…AIVHRIPPPK (183 aa). Residues 19-24 and 136-139 each bind GTP; these read DHGKST and NKID.

This sequence belongs to the TRAFAC class translation factor GTPase superfamily. Classic translation factor GTPase family. LepA subfamily.

It is found in the cell inner membrane. The enzyme catalyses GTP + H2O = GDP + phosphate + H(+). Its function is as follows. Required for accurate and efficient protein synthesis under certain stress conditions. May act as a fidelity factor of the translation reaction, by catalyzing a one-codon backward translocation of tRNAs on improperly translocated ribosomes. Back-translocation proceeds from a post-translocation (POST) complex to a pre-translocation (PRE) complex, thus giving elongation factor G a second chance to translocate the tRNAs correctly. Binds to ribosomes in a GTP-dependent manner. The polypeptide is Elongation factor 4 (Stenotrophomonas maltophilia (strain R551-3)).